The sequence spans 572 residues: Vacuolar protein sorting-associated protein vps901 (572 aa).

Composition is skewed to basic and acidic residues over residues 1 to 31 and 39 to 53; these read MDYPSFHEDPTKDESTVAEQRKGQSNEEKPL and DEQRNAYNEHCKNHD. The disordered stretch occupies residues 1–108; the sequence is MDYPSFHEDP…HENNPGQQEI (108 aa). Positions 69-80 are enriched in polar residues; it reads QYEQTDSSSDQE. Positions 82 to 98 are enriched in basic and acidic residues; sequence MNEKQSLDKENRNDNIP. The VPS9 domain maps to 219–357; the sequence is VEEDRVLSEK…IETLDCSSLT (139 aa). Residues 430–502 are disordered; sequence QIDTPESKEY…IVHEEQPVDD (73 aa). The span at 445 to 457 shows a compositional bias: polar residues; sequence PRGSSHSGSFTTD. The region spanning 529–571 is the CUE domain; it reads REKAEAITALRAMFPAFDSEVIEVVLNAQQGRLSSSIDSLLEM.

Functionally, required for vacuolar protein sorting; may be required for the consumption of transport vesicles containing vacuolar protein precursors. Required for vacuolar fusion. The sequence is that of Vacuolar protein sorting-associated protein vps901 (vps901) from Schizosaccharomyces pombe (strain 972 / ATCC 24843) (Fission yeast).